Reading from the N-terminus, the 488-residue chain is ATP synthase subunit beta (488 aa).

Gly-155 to Thr-162 provides a ligand contact to ATP. A disordered region spans residues Gly-467–Asn-488.

It belongs to the ATPase alpha/beta chains family. In terms of assembly, F-type ATPases have 2 components, CF(1) - the catalytic core - and CF(0) - the membrane proton channel. CF(1) has five subunits: alpha(3), beta(3), gamma(1), delta(1), epsilon(1). CF(0) has three main subunits: a(1), b(2) and c(9-12). The alpha and beta chains form an alternating ring which encloses part of the gamma chain. CF(1) is attached to CF(0) by a central stalk formed by the gamma and epsilon chains, while a peripheral stalk is formed by the delta and b chains.

It is found in the cell membrane. The catalysed reaction is ATP + H2O + 4 H(+)(in) = ADP + phosphate + 5 H(+)(out). Produces ATP from ADP in the presence of a proton gradient across the membrane. The catalytic sites are hosted primarily by the beta subunits. The polypeptide is ATP synthase subunit beta (Lacticaseibacillus casei (strain BL23) (Lactobacillus casei)).